Consider the following 1003-residue polypeptide: MGLFFDSPGSNLYLPCFTLVDAPKLVPLPGVSYKVSFERDSIIHVLSEFKRNNSFKNNHLLDKINTAIAQNEIVVDNSVVNSCKQFHKKYGSDNSNNDAEVQMYIVLLPFEAVNNSVGAASRITAIQVEDDTITITFKSVARVENKQPLLNMQHSLWKSSILEIDDRSELRTWDHKSINKSILSFVKIFYDTDKIIKDFKSKYSLASKRSGDIDSRVLYLSPLANTLFMQLNGSHFNKSWKLLKAYLEQLTVLERNYDTCFELVSMMDLVMSILPMSLKQRLDFLTAKKLKSRAILFSTCVQDFQQIFKKLDDSVDYVNNHFSNSSNNDKSKLIANQLRALRFYIDDIKRNNSSVILKANSEKERTDVTSPNKFLKTSSSHDEDSDSNDEMEQIKSFIDSLEEKNVHPDGIKLLQKDFKRFMKMTPQNADYQVLRNYFDIVMDIPFGKTVNISTIDLAKSRAKLNEDHYGLQSVKRRLVEYLSVLKISEISTNDPNLNTDLHPKKDRASINKPPILLLVGPPGVGKTSIAKSVADVLGRKFQRISLGGIHNEAEIRGHRRTYVGSMCGLIIGALRKAGTMNPLILLDEVDKVLSGGVGGFGNRVNGDPGAALLEVLDPEQNSTFSDHYVGFPVDLSQVLFFCTANDLEGISEPLLNRMELIELPGYTPDEKIMIGSKFLLPKQIKANGLDAIKELPKIYLTDEAWNCVVLEYTREPGVRGLERRIGAIVRGKVVEYVENKMIQGEVDKEHLYKYLGLAHHPISEEILAPTEHSEKFGVVNGLSYNSDGSGSVLLFEVIKIHTDESGATNGPYIKTTGNLGNILEESIKIATSFVKHILFRGLIPGVNEKDINEFLTSEYHLHVPMGAVSKDGPSAGAAISLAILSCALKRPVSPKLCMTGEITLRGKILPIGGIKEKLLGAQFYHMNHVLVPSANLSDVVQAVSTDNQEQYEIYMDRSRQPELQKLKDKTQLQLHYCSDFFDVVKYTWPELLNKEVSHSRPSL.

One can recognise a Lon N-terminal domain in the interval 14–305; it reads LPCFTLVDAP…LFSTCVQDFQ (292 aa). The interval 367–389 is disordered; the sequence is DVTSPNKFLKTSSSHDEDSDSND. A compositionally biased stretch (polar residues) spans 368 to 377; it reads VTSPNKFLKT. 520–527 provides a ligand contact to ATP; sequence GPPGVGKT. The region spanning 773–969 is the Lon proteolytic domain; sequence SEKFGVVNGL…QPELQKLKDK (197 aa). Residues S874 and K917 contribute to the active site.

It belongs to the peptidase S16 family.

It is found in the peroxisome matrix. It catalyses the reaction Hydrolysis of proteins in presence of ATP.. Functionally, ATP-dependent serine protease that mediates the selective degradation of misfolded and unassembled polypeptides in the peroxisomal matrix. Necessary for type 2 peroxisome targeting signal (PTS2)-containing protein processing and facilitates peroxisome matrix protein import. This Kluyveromyces lactis (strain ATCC 8585 / CBS 2359 / DSM 70799 / NBRC 1267 / NRRL Y-1140 / WM37) (Yeast) protein is Lon protease homolog 2, peroxisomal.